The chain runs to 80 residues: Cytochrome c oxidase subunit 7B, mitochondrial (80 aa).

A mitochondrion-targeting transit peptide spans 1 to 24 (MLPLAKNALSRLQVRSIQQVVARQ). Over 25-32 (SHQKKTPT) the chain is Mitochondrial matrix. The chain crosses the membrane as a helical span at residues 33–59 (FHDKYGNAVLAGGSIFCISAWTYTATQ). The Mitochondrial intermembrane segment spans residues 60–80 (IGIEWNLSPVGRVTPKEWRDQ).

This sequence belongs to the cytochrome c oxidase VIIb family. As to quaternary structure, component of the cytochrome c oxidase (complex IV, CIV), a multisubunit enzyme composed of 14 subunits. The complex is composed of a catalytic core of 3 subunits MT-CO1, MT-CO2 and MT-CO3, encoded in the mitochondrial DNA, and 11 supernumerary subunits COX4I, COX5A, COX5B, COX6A, COX6B, COX6C, COX7A, COX7B, COX7C, COX8 and NDUFA4, which are encoded in the nuclear genome. The complex exists as a monomer or a dimer and forms supercomplexes (SCs) in the inner mitochondrial membrane with NADH-ubiquinone oxidoreductase (complex I, CI) and ubiquinol-cytochrome c oxidoreductase (cytochrome b-c1 complex, complex III, CIII), resulting in different assemblies (supercomplex SCI(1)III(2)IV(1) and megacomplex MCI(2)III(2)IV(2)).

The protein localises to the mitochondrion inner membrane. It functions in the pathway energy metabolism; oxidative phosphorylation. Functionally, component of the cytochrome c oxidase, the last enzyme in the mitochondrial electron transport chain which drives oxidative phosphorylation. The respiratory chain contains 3 multisubunit complexes succinate dehydrogenase (complex II, CII), ubiquinol-cytochrome c oxidoreductase (cytochrome b-c1 complex, complex III, CIII) and cytochrome c oxidase (complex IV, CIV), that cooperate to transfer electrons derived from NADH and succinate to molecular oxygen, creating an electrochemical gradient over the inner membrane that drives transmembrane transport and the ATP synthase. Cytochrome c oxidase is the component of the respiratory chain that catalyzes the reduction of oxygen to water. Electrons originating from reduced cytochrome c in the intermembrane space (IMS) are transferred via the dinuclear copper A center (CU(A)) of subunit 2 and heme A of subunit 1 to the active site in subunit 1, a binuclear center (BNC) formed by heme A3 and copper B (CU(B)). The BNC reduces molecular oxygen to 2 water molecules using 4 electrons from cytochrome c in the IMS and 4 protons from the mitochondrial matrix. Plays a role in proper central nervous system (CNS) development in vertebrates. This is Cytochrome c oxidase subunit 7B, mitochondrial (Cox7b) from Rattus norvegicus (Rat).